We begin with the raw amino-acid sequence, 163 residues long: Crossover junction endodeoxyribonuclease RuvC (163 aa).

Residues Asp-7, Glu-66, and Asp-139 contribute to the active site. Mg(2+) contacts are provided by Asp-7, Glu-66, and Asp-139.

This sequence belongs to the RuvC family. As to quaternary structure, homodimer which binds Holliday junction (HJ) DNA. The HJ becomes 2-fold symmetrical on binding to RuvC with unstacked arms; it has a different conformation from HJ DNA in complex with RuvA. In the full resolvosome a probable DNA-RuvA(4)-RuvB(12)-RuvC(2) complex forms which resolves the HJ. It depends on Mg(2+) as a cofactor.

Its subcellular location is the cytoplasm. It catalyses the reaction Endonucleolytic cleavage at a junction such as a reciprocal single-stranded crossover between two homologous DNA duplexes (Holliday junction).. In terms of biological role, the RuvA-RuvB-RuvC complex processes Holliday junction (HJ) DNA during genetic recombination and DNA repair. Endonuclease that resolves HJ intermediates. Cleaves cruciform DNA by making single-stranded nicks across the HJ at symmetrical positions within the homologous arms, yielding a 5'-phosphate and a 3'-hydroxyl group; requires a central core of homology in the junction. The consensus cleavage sequence is 5'-(A/T)TT(C/G)-3'. Cleavage occurs on the 3'-side of the TT dinucleotide at the point of strand exchange. HJ branch migration catalyzed by RuvA-RuvB allows RuvC to scan DNA until it finds its consensus sequence, where it cleaves and resolves the cruciform DNA. In Thermomicrobium roseum (strain ATCC 27502 / DSM 5159 / P-2), this protein is Crossover junction endodeoxyribonuclease RuvC.